A 238-amino-acid polypeptide reads, in one-letter code: 2-C-methyl-D-erythritol 4-phosphate cytidylyltransferase (238 aa).

It belongs to the IspD/TarI cytidylyltransferase family. IspD subfamily.

It catalyses the reaction 2-C-methyl-D-erythritol 4-phosphate + CTP + H(+) = 4-CDP-2-C-methyl-D-erythritol + diphosphate. It functions in the pathway isoprenoid biosynthesis; isopentenyl diphosphate biosynthesis via DXP pathway; isopentenyl diphosphate from 1-deoxy-D-xylulose 5-phosphate: step 2/6. In terms of biological role, catalyzes the formation of 4-diphosphocytidyl-2-C-methyl-D-erythritol from CTP and 2-C-methyl-D-erythritol 4-phosphate (MEP). This is 2-C-methyl-D-erythritol 4-phosphate cytidylyltransferase from Alteromonas mediterranea (strain DSM 17117 / CIP 110805 / LMG 28347 / Deep ecotype).